Consider the following 111-residue polypeptide: Large ribosomal subunit protein eL33z (111 aa).

The protein belongs to the eukaryotic ribosomal protein eL33 family.

This chain is Large ribosomal subunit protein eL33z (RPL35AB), found in Arabidopsis thaliana (Mouse-ear cress).